Here is a 316-residue protein sequence, read N- to C-terminus: tRNA uridine(34) hydroxylase (316 aa).

Residues 123-217 (LDEDTVVIDA…YGKNPETRGE (95 aa)) enclose the Rhodanese domain. C177 serves as the catalytic Cysteine persulfide intermediate.

It belongs to the TrhO family.

It catalyses the reaction uridine(34) in tRNA + AH2 + O2 = 5-hydroxyuridine(34) in tRNA + A + H2O. Functionally, catalyzes oxygen-dependent 5-hydroxyuridine (ho5U) modification at position 34 in tRNAs. The protein is tRNA uridine(34) hydroxylase of Enterococcus faecalis (strain ATCC 700802 / V583).